The following is a 365-amino-acid chain: 5-hydroxytryptamine receptor 1E (365 aa).

At 1 to 21 (MNITNCTTEASMAIRPKTITE) the chain is on the extracellular side. N-linked (GlcNAc...) asparagine glycosylation is found at asparagine 2 and asparagine 5. A helical transmembrane segment spans residues 22 to 45 (KMLICMTLVVITTLTTLLNLAVIM). Residues 46–59 (AIGTTKKLHQPANY) lie on the Cytoplasmic side of the membrane. A helical membrane pass occupies residues 60–84 (LICSLAVTDLLVAVLVMPLSIIYIV). Topologically, residues 85–92 (MDRWKLGY) are extracellular. The chain crosses the membrane as a helical span at residues 93 to 118 (FLCEVWLSVDMTCCTCSILHLCVIAL). A disulfide bond links cysteine 95 and cysteine 173. Serotonin contacts are provided by aspartate 102 and cysteine 106. A DRY motif; important for ligand-induced conformation changes motif is present at residues 119 to 121 (DRY). Residues 119-138 (DRYWAITNAIEYARKRTAKR) are Cytoplasmic-facing. A helical membrane pass occupies residues 139–157 (AALMILTVWTISIFISMPP). At 158–179 (LFWRSHRRLSPPPSQCTIQHDH) the chain is on the extracellular side. The helical transmembrane segment at 180 to 203 (VIYTIYSTLGAFYIPLTLILILYY) threads the bilayer. Residues 204-291 (RIYHAAKSLY…SSTRERKAAR (88 aa)) are Cytoplasmic-facing. A helical membrane pass occupies residues 292–316 (ILGLILGAFILSWLPFFIKELIVGL). Residues 317-322 (SIYTVS) are Extracellular-facing. A helical membrane pass occupies residues 323-345 (SEVADFLTWLGYVNSLINPLLYT). Residues 340 to 344 (NPLLY) carry the NPxxY motif; important for ligand-induced conformation changes and signaling motif. The Cytoplasmic segment spans residues 346–365 (SFNEDFKLAFKKLIRCREHT).

Belongs to the G-protein coupled receptor 1 family. In terms of tissue distribution, detected in brain.

Its subcellular location is the cell membrane. G-protein coupled receptor for 5-hydroxytryptamine (serotonin). Also functions as a receptor for various alkaloids and psychoactive substances. Ligand binding causes a conformation change that triggers signaling via guanine nucleotide-binding proteins (G proteins) and modulates the activity of downstream effectors, such as adenylate cyclase. HTR1E is coupled to G(i)/G(o) G alpha proteins and mediates inhibitory neurotransmission by inhibiting adenylate cyclase activity. This is 5-hydroxytryptamine receptor 1E from Homo sapiens (Human).